Reading from the N-terminus, the 304-residue chain is Ribonuclease Z (304 aa).

The Zn(2+) site is built by His-63, His-65, Asp-67, His-68, His-141, Asp-208, and His-266. The Proton acceptor role is filled by Asp-67.

Belongs to the RNase Z family. As to quaternary structure, homodimer. Zn(2+) serves as cofactor.

It catalyses the reaction Endonucleolytic cleavage of RNA, removing extra 3' nucleotides from tRNA precursor, generating 3' termini of tRNAs. A 3'-hydroxy group is left at the tRNA terminus and a 5'-phosphoryl group is left at the trailer molecule.. Its function is as follows. Zinc phosphodiesterase, which displays some tRNA 3'-processing endonuclease activity. Probably involved in tRNA maturation, by removing a 3'-trailer from precursor tRNA. The sequence is that of Ribonuclease Z from Chlamydia trachomatis serovar L2 (strain ATCC VR-902B / DSM 19102 / 434/Bu).